The following is a 209-amino-acid chain: GTP-binding nuclear protein Ran1B (209 aa).

Positions 1 to 162 (NFKLVIVGDG…LYLARKLAGD (162 aa)) constitute a Small GTPase Ran-type domain. GTP is bound at residue 9–16 (DGGTGKTT). Residues 28–36 (KKYEPTIGV) are switch-I. GTP-binding positions include Gly-59, 113 to 116 (NKVD), and 141 to 143 (SAK). Residues 59–75 (GQEKFGGLRDGYYIHGQ) are switch-II. The segment covering 187-200 (QHEAELAAAASQPL) has biased composition (low complexity). The tract at residues 187–209 (QHEAELAAAASQPLPDDDDDAFD) is disordered.

The protein belongs to the small GTPase superfamily. Ran family. As to quaternary structure, found in a nuclear export complex with RanGTP, exportin and pre-miRNA.

Its subcellular location is the nucleus. Functionally, GTP-binding protein involved in nucleocytoplasmic transport. Required for the import of protein into the nucleus and also for RNA export. Involved in chromatin condensation and control of cell cycle. The protein is GTP-binding nuclear protein Ran1B (RAN1B) of Lotus japonicus (Lotus corniculatus var. japonicus).